A 537-amino-acid polypeptide reads, in one-letter code: Cytochrome bd ubiquinol oxidase subunit 1 (537 aa).

Residues 1-24 are Cytoplasmic-facing; that stretch reads MISESVVDLSRLQFAMTALYHFLF. Residue His21 coordinates heme b. Residues 25 to 44 traverse the membrane as a helical segment; it reads VPLTLGMTFLLAIMESVYVM. Over 45–96 the chain is Periplasmic; the sequence is TGKQVYKDMVKFWGKLFGINFALGVTTGITMEFQFGTNWAYYSHYVGDIFGA. The chain crosses the membrane as a helical span at residues 97–116; it reads PLAIEGLTAFFLESTFIGMF. At 117–131 the chain is on the cytoplasmic side; that stretch reads FFGWDRLSKIQHLAV. Residues 132–151 traverse the membrane as a helical segment; it reads TWLVALGSNLSALWILVANG. Topologically, residues 152 to 189 are periplasmic; sequence WMQHPVGAEFNFETMRMELVDFGALLLNPVAQVKFVHT. A heme b-binding site is contributed by His188. The chain crosses the membrane as a helical span at residues 190–209; sequence VASGYVTGAVFVLAISSYYL. The Cytoplasmic portion of the chain corresponds to 210-221; that stretch reads LKKRDLGFARRS. The chain crosses the membrane as a helical span at residues 222 to 241; it reads FAIASAFGMASILSVIVLGD. The Periplasmic segment spans residues 242 to 394; it reads ESGYEVGEVQ…VASMFWSFRA (153 aa). Residue Met395 participates in heme b binding. The chain crosses the membrane as a helical span at residues 395–414; sequence MVGAGFAMLILFVCAFWASA. Topologically, residues 415–472 are cytoplasmic; that stretch reads RKNEESKPWLLKFALYSLPLPWIATQTGWFVAEHGRQPWTIGGVLPTHLSASSLSTGD. A helical membrane pass occupies residues 473–492; sequence LWGSLIALIAFYTLLLVVEM. The Periplasmic portion of the chain corresponds to 493-537; it reads YLMIRFARLGPSSLHTGRYHFEQLEQHAVKHASPSQADPQQPVNA.

This sequence belongs to the cytochrome ubiquinol oxidase subunit 1 family. In terms of assembly, heterodimer of subunits I and II. Requires heme b as cofactor. The cofactor is heme d cis-diol.

The protein resides in the cell inner membrane. The catalysed reaction is 2 a ubiquinol + O2(in) + 4 H(+)(in) = 2 a ubiquinone + 2 H2O(in) + 4 H(+)(out). In terms of biological role, may be involved in maintaining the low intracellular oxygen concentration required for nitrogen fixation. The sequence is that of Cytochrome bd ubiquinol oxidase subunit 1 (cydA) from Azotobacter vinelandii.